The chain runs to 107 residues: uncharacterized protein (107 aa).

This is an uncharacterized protein from Acidianus sp. F28 (AFV-2).